A 405-amino-acid chain; its full sequence is Tryptophan synthase beta chain (405 aa).

At Lys98 the chain carries N6-(pyridoxal phosphate)lysine.

It belongs to the TrpB family. In terms of assembly, tetramer of two alpha and two beta chains. Pyridoxal 5'-phosphate serves as cofactor.

It catalyses the reaction (1S,2R)-1-C-(indol-3-yl)glycerol 3-phosphate + L-serine = D-glyceraldehyde 3-phosphate + L-tryptophan + H2O. The protein operates within amino-acid biosynthesis; L-tryptophan biosynthesis; L-tryptophan from chorismate: step 5/5. The beta subunit is responsible for the synthesis of L-tryptophan from indole and L-serine. The sequence is that of Tryptophan synthase beta chain from Xanthomonas euvesicatoria pv. vesicatoria (strain 85-10) (Xanthomonas campestris pv. vesicatoria).